We begin with the raw amino-acid sequence, 624 residues long: MPATPSNVPEPSRTDPALIRNFCIIAHIDHGKSTLADRMLQLTGVVDQRQMRAQYLDRMDIERERGITIKSQAVRLPWAPTEGEDKGLTHVLNMIDTPGHVDFTYEVSRSLAACEGTVLLVDAAQGIEAQTLANLYLAMENDLTIVPVLNKIDLPAAQPEKFSEELANLIGCQPEDVLKVSAKTGVGVDALLDRVVRDVPAPVGVADAPARAMIFDSVYDSYRGVVTYVRVVDGQLNKRERIRMMSTGATHELLEIGVSSPEMTPADGIGVGEVGYIITGVKDVRQSKVGDTITSLQNGATEALGGYKDPKPMVFSGLYPLDGSDYPDLREALDKLQLNDAALVYEPETSAALGFGFRVGFLGLLHLDVVRERLEREFGLDLIATAPNVVYRVEMEDGTEHVVTNPSEFPEGKIDKVHEPVVRATVLAPSEFIGAIMELCQGRRGTLLGMDYLSEDRVEIRYTLPLAEIVFDFFDQLKSKTRGYASLDYEPTGEQTANLVKVDILLHGDKVDAFSAVTHKDKAYAYGVRLVAKLQKLIPRQNFEVPIQAAIGARVIARETVRAIRKDVLAKCYGGDISRKRKLLEKQKEGKKRMKMVGNVEVPQDAFISVLSTDESAGEGKGKK.

The 187-residue stretch at 17–203 folds into the tr-type G domain; the sequence is ALIRNFCIIA…RVVRDVPAPV (187 aa). GTP-binding positions include 29 to 34 and 150 to 153; these read DHGKST and NKID.

Belongs to the TRAFAC class translation factor GTPase superfamily. Classic translation factor GTPase family. LepA subfamily.

It is found in the cell membrane. The catalysed reaction is GTP + H2O = GDP + phosphate + H(+). Functionally, required for accurate and efficient protein synthesis under certain stress conditions. May act as a fidelity factor of the translation reaction, by catalyzing a one-codon backward translocation of tRNAs on improperly translocated ribosomes. Back-translocation proceeds from a post-translocation (POST) complex to a pre-translocation (PRE) complex, thus giving elongation factor G a second chance to translocate the tRNAs correctly. Binds to ribosomes in a GTP-dependent manner. The sequence is that of Elongation factor 4 from Streptomyces griseus subsp. griseus (strain JCM 4626 / CBS 651.72 / NBRC 13350 / KCC S-0626 / ISP 5235).